Here is a 392-residue protein sequence, read N- to C-terminus: Protein NolC (392 aa).

A J domain is found at 2-71 (KRDLYETLGV…RAAYDRYGHA (70 aa)). Disordered stretches follow at residues 103 to 142 (RRDDGRRSSAPLLGRSRTRCGPSLQHGDHPRGGLFRQDGA) and 157 to 244 (LGRE…TGLR). Residues 157–170 (LGREAGHQPEDLRH) show a composition bias toward basic and acidic residues. Residues 171–185 (LPGLRPYPRRPGLLL) show a composition bias toward low complexity. Over residues 186-203 (DRTHLPDLRRSRSDDHRS) the composition is skewed to basic and acidic residues. A compositionally biased stretch (basic residues) spans 227–241 (HRGRHAYPPLRRGRT).

This is Protein NolC (nolC) from Rhizobium fredii (Sinorhizobium fredii).